Reading from the N-terminus, the 602-residue chain is Probable HECT-type ubiquitin ligase-interacting protein creD (602 aa).

Disordered stretches follow at residues 375-398 and 457-499; these read EVDP…GALS and TADY…MATP. Over residues 463–475 the composition is skewed to low complexity; that stretch reads PSSGSNSHSPASP. Over residues 477–492 the composition is skewed to basic and acidic residues; sequence LSRRPSDEGYRDHDHI.

The protein belongs to the arrestin family. In terms of assembly, interacts with hulA.

Component of the regulatory network controlling carbon source utilization through ubiquitination and deubiquitination involving creA, creB, creC, creD and acrB. May be involved in signaling by recognizing appropriately phosphorylated substrates via its arrestin domains and then recruit a HECT-type ubiquitin ligase such as hulA, leading to ubiquitination of the substrate, providing a link between ubiquitination and phosphorylation in protein regulation and stability. This is Probable HECT-type ubiquitin ligase-interacting protein creD (creD) from Aspergillus clavatus (strain ATCC 1007 / CBS 513.65 / DSM 816 / NCTC 3887 / NRRL 1 / QM 1276 / 107).